Consider the following 422-residue polypeptide: Charged multivesicular body protein 7 (422 aa).

Positions 234-304 form a coiled coil; sequence KLLSERLQSA…ERISAAETDR (71 aa). The segment at 394-422 is disordered; that stretch reads RPTEWKMDQAAHSPADGSFLRSVPEPMLQ.

It belongs to the SNF7 family.

The protein localises to the cytoplasm. Its subcellular location is the nucleus envelope. Its function is as follows. ESCRT-III-like protein required to recruit the ESCRT-III complex to the nuclear envelope during late anaphase. Together with SPAST, the ESCRT-III complex promotes nuclear envelope sealing and mitotic spindle disassembly during late anaphase. Plays a role in the endosomal sorting pathway. The sequence is that of Charged multivesicular body protein 7 (chmp7) from Xenopus laevis (African clawed frog).